The primary structure comprises 385 residues: Alkanesulfonate monooxygenase (385 aa).

Belongs to the SsuD family.

The catalysed reaction is an alkanesulfonate + FMNH2 + O2 = an aldehyde + FMN + sulfite + H2O + 2 H(+). Its function is as follows. Catalyzes the desulfonation of aliphatic sulfonates. In Burkholderia pseudomallei (strain 1710b), this protein is Alkanesulfonate monooxygenase.